Reading from the N-terminus, the 108-residue chain is MVKLRLKRIGKKQAPFYRIVVADSRVNRNGQYIELVGTFNPLKDEVKIDNELTLKWLNNGAQPTDTVRSLLSKQGILKALHESKFSKNTQTENKKPVSKKTTKKSKDN.

The tract at residues 82-108 (ESKFSKNTQTENKKPVSKKTTKKSKDN) is disordered. Over residues 96-108 (PVSKKTTKKSKDN) the composition is skewed to basic residues.

Belongs to the bacterial ribosomal protein bS16 family.

The sequence is that of Small ribosomal subunit protein bS16 from Mycoplasma mycoides subsp. mycoides SC (strain CCUG 32753 / NCTC 10114 / PG1).